A 286-amino-acid polypeptide reads, in one-letter code: MKKAMLALAATSVIALSACGTSSSDKIVTSKAGDITKEEFYDQMKTQAGKQVLNNMVMEKVLIKNYKVEDKDVDKKFDEMKKQYGDQFDTLLKQQGIKEETIKTGVRAQLAQEKAIEKTITDKELKENYKPEIKASHILVKDEATAKKVKEELGQGKSFEELAKQYSEDTGSKEKGGDLGYFTAGKMVKEFEDAAYKLKKDEVSEPVKSQFGYHIIKVTDIKEQKPFDEVKGDIKKDLVQKKAQDAAFMNDLMMKEIKKADVKVDDKDLKDLFEEKKADDKKEEKK.

The N-terminal stretch at 1–18 (MKKAMLALAATSVIALSA) is a signal peptide. A lipid anchor (N-palmitoyl cysteine) is attached at cysteine 19. Residue cysteine 19 is the site of S-diacylglycerol cysteine attachment. One can recognise a PpiC domain in the interval 130 to 220 (KPEIKASHIL…FGYHIIKVTD (91 aa)).

This sequence belongs to the PrsA family.

Its subcellular location is the cell membrane. The enzyme catalyses [protein]-peptidylproline (omega=180) = [protein]-peptidylproline (omega=0). Plays a major role in protein secretion by helping the post-translocational extracellular folding of several secreted proteins. This chain is Foldase protein PrsA 1 (prsA1), found in Bacillus cereus (strain ATCC 14579 / DSM 31 / CCUG 7414 / JCM 2152 / NBRC 15305 / NCIMB 9373 / NCTC 2599 / NRRL B-3711).